Here is a 206-residue protein sequence, read N- to C-terminus: Holliday junction branch migration complex subunit RuvA (206 aa).

Residues 1-64 form a domain I region; that stretch reads MIGRLSGTIL…EDAQLLYGFN (64 aa). Residues 65 to 143 form a domain II region; that stretch reads KKSERELFRE…GWGEGDLFTP (79 aa). The flexible linker stretch occupies residues 144 to 157; it reads ASDAAASNAEIQKY. The interval 158–206 is domain III; the sequence is SSARAEDEAVSALIALGYKALQAAKVVSQVVKPEMSSENIIREALRSMV.

Belongs to the RuvA family. Homotetramer. Forms an RuvA(8)-RuvB(12)-Holliday junction (HJ) complex. HJ DNA is sandwiched between 2 RuvA tetramers; dsDNA enters through RuvA and exits via RuvB. An RuvB hexamer assembles on each DNA strand where it exits the tetramer. Each RuvB hexamer is contacted by two RuvA subunits (via domain III) on 2 adjacent RuvB subunits; this complex drives branch migration. In the full resolvosome a probable DNA-RuvA(4)-RuvB(12)-RuvC(2) complex forms which resolves the HJ.

The protein localises to the cytoplasm. Its function is as follows. The RuvA-RuvB-RuvC complex processes Holliday junction (HJ) DNA during genetic recombination and DNA repair, while the RuvA-RuvB complex plays an important role in the rescue of blocked DNA replication forks via replication fork reversal (RFR). RuvA specifically binds to HJ cruciform DNA, conferring on it an open structure. The RuvB hexamer acts as an ATP-dependent pump, pulling dsDNA into and through the RuvAB complex. HJ branch migration allows RuvC to scan DNA until it finds its consensus sequence, where it cleaves and resolves the cruciform DNA. The polypeptide is Holliday junction branch migration complex subunit RuvA (Photobacterium profundum (strain SS9)).